The primary structure comprises 650 residues: MDKNKDLLENEQFLRIQKLNASDAGKRQSILVDNEDELYGLTSSNNSCASEHEGEGEGEDERPATTSSAPTQNHSAGDVAFIPGKTAEEDTETVTKVVESDDQVFRTHVQTLSSKGKSRYRKGSSNFISFFDDMAFENRPSILDGSVNDPFKTKFVGPTLEKEIRKREKELMAMRKNLHHGKPAPDADAADAPALTTTTTTTTSATSPETVVTIETTILSSNFSGLYVAFWMAIAFGAVKALIDYYYQHNGSFKDSEILKFMTTNLSTVALIDLIMYLSTFFVVGIQYLCKWGVLNWSSTGWAFTSIYELLFVGFYMYLTENILKLHWLSKIFLFLHSLVLLMKMHSFAFYNGYLWGIKQELQFSKSALAKYKDSVNDPDVVDALEKSCEFCSFELNSQSLNDQTQKFPNNINVSNFFMFTMFPTLIYQIEYPRTKEIRWVYVLEKICAIFGTIFLMMIDAQILMHPVAMRALDVRNSEWTGILDRLLKWAGLLVDIVPGFIVMYILDFYLIWDAILNCVAELTRFGDRYFYGDWWNCVSWADFSRIWNIPVHKFLLRHVYHSSMSSFKLNKSQATLMTFFLSSVVHELAMYVIFKRLRFYLFFFQMLQVPLVALTNTKYMKDRTVIGNVIFWLGICMGPSVMCTLYLTF.

Residues 41 to 79 (LTSSNNSCASEHEGEGEGEDERPATTSSAPTQNHSAGDV) are disordered. Positions 64–75 (ATTSSAPTQNHS) are enriched in polar residues. The next 5 membrane-spanning stretches (helical) occupy residues 223–243 (FSGL…KALI), 300–320 (TGWA…MYLT), 412–432 (INVS…QIEY), 450–470 (IFGT…PVAM), and 493–513 (LLVD…YLIW). The FYXDWWN motif signature appears at 531-537 (FYGDWWN). 2 consecutive transmembrane segments (helical) span residues 575–595 (ATLM…YVIF) and 630–650 (VIFW…YLTF). Residue H587 is part of the active site.

It belongs to the membrane-bound acyltransferase family. Sterol o-acyltransferase subfamily.

It localises to the endoplasmic reticulum membrane. Sterol O-acyltransferase that catalyzes the formation of stery esters. The sequence is that of Sterol O-acyltransferase 2 (ARE2) from Saccharomyces uvarum (strain ATCC 76518 / CBS 7001 / CLIB 283 / NBRC 10550 / MCYC 623 / NCYC 2669 / NRRL Y-11845) (Yeast).